A 156-amino-acid chain; its full sequence is Small ribosomal subunit protein uS7 (156 aa).

Belongs to the universal ribosomal protein uS7 family. As to quaternary structure, part of the 30S ribosomal subunit. Contacts proteins S9 and S11.

Functionally, one of the primary rRNA binding proteins, it binds directly to 16S rRNA where it nucleates assembly of the head domain of the 30S subunit. Is located at the subunit interface close to the decoding center, probably blocks exit of the E-site tRNA. This is Small ribosomal subunit protein uS7 from Arthrospira platensis (Spirulina platensis).